A 215-amino-acid polypeptide reads, in one-letter code: Probable transaldolase (215 aa).

Lys83 acts as the Schiff-base intermediate with substrate in catalysis.

Belongs to the transaldolase family. Type 3B subfamily.

The protein resides in the cytoplasm. It carries out the reaction D-sedoheptulose 7-phosphate + D-glyceraldehyde 3-phosphate = D-erythrose 4-phosphate + beta-D-fructose 6-phosphate. Its pathway is carbohydrate degradation; pentose phosphate pathway; D-glyceraldehyde 3-phosphate and beta-D-fructose 6-phosphate from D-ribose 5-phosphate and D-xylulose 5-phosphate (non-oxidative stage): step 2/3. Functionally, transaldolase is important for the balance of metabolites in the pentose-phosphate pathway. The chain is Probable transaldolase from Clostridium kluyveri (strain NBRC 12016).